The following is a 901-amino-acid chain: HTH-type transcriptional regulator MalT (901 aa).

39–46 (SPAGYGKT) is an ATP binding site. The HTH luxR-type domain maps to 829–894 (ELIRTSPLTQ…AAVQHAQKLL (66 aa)). The segment at residues 853–872 (NEQIAGELEVAATTIKTHIR) is a DNA-binding region (H-T-H motif).

This sequence belongs to the MalT family. Monomer in solution. Oligomerizes to an active state in the presence of the positive effectors ATP and maltotriose.

With respect to regulation, activated by ATP and maltotriose, which are both required for DNA binding. Its function is as follows. Positively regulates the transcription of the maltose regulon whose gene products are responsible for uptake and catabolism of malto-oligosaccharides. Specifically binds to the promoter region of its target genes, recognizing a short DNA motif called the MalT box. This chain is HTH-type transcriptional regulator MalT, found in Escherichia coli O45:K1 (strain S88 / ExPEC).